Reading from the N-terminus, the 88-residue chain is HssA/B-like protein 19 (88 aa).

The protein belongs to the hssA/B family.

The polypeptide is HssA/B-like protein 19 (hssl19) (Dictyostelium discoideum (Social amoeba)).